Here is a 389-residue protein sequence, read N- to C-terminus: Succinate--CoA ligase [ADP-forming] subunit beta (389 aa).

The ATP-grasp domain occupies 9–236 (RDMFEAHGVP…KDAADPLEAK (228 aa)). Residues lysine 45, 52-54 (GRG), alanine 94, and glutamate 99 each bind ATP. 2 residues coordinate Mg(2+): asparagine 191 and aspartate 205. Substrate-binding positions include asparagine 256 and 318-320 (GIT).

The protein belongs to the succinate/malate CoA ligase beta subunit family. Heterotetramer of two alpha and two beta subunits. It depends on Mg(2+) as a cofactor.

The catalysed reaction is succinate + ATP + CoA = succinyl-CoA + ADP + phosphate. It catalyses the reaction GTP + succinate + CoA = succinyl-CoA + GDP + phosphate. Its pathway is carbohydrate metabolism; tricarboxylic acid cycle; succinate from succinyl-CoA (ligase route): step 1/1. Succinyl-CoA synthetase functions in the citric acid cycle (TCA), coupling the hydrolysis of succinyl-CoA to the synthesis of either ATP or GTP and thus represents the only step of substrate-level phosphorylation in the TCA. The beta subunit provides nucleotide specificity of the enzyme and binds the substrate succinate, while the binding sites for coenzyme A and phosphate are found in the alpha subunit. The polypeptide is Succinate--CoA ligase [ADP-forming] subunit beta (Arthrobacter sp. (strain FB24)).